A 211-amino-acid chain; its full sequence is Thiamine-phosphate synthase (211 aa).

Residues 37–41 and Asn-69 each bind 4-amino-2-methyl-5-(diphosphooxymethyl)pyrimidine; that span reads QLRIK. Asp-70 and Asp-89 together coordinate Mg(2+). Ser-108 contributes to the 4-amino-2-methyl-5-(diphosphooxymethyl)pyrimidine binding site. Position 134–136 (134–136) interacts with 2-[(2R,5Z)-2-carboxy-4-methylthiazol-5(2H)-ylidene]ethyl phosphate; the sequence is TQT. Lys-137 lines the 4-amino-2-methyl-5-(diphosphooxymethyl)pyrimidine pocket. Residues Gly-166 and 186–187 contribute to the 2-[(2R,5Z)-2-carboxy-4-methylthiazol-5(2H)-ylidene]ethyl phosphate site; that span reads VS.

Belongs to the thiamine-phosphate synthase family. The cofactor is Mg(2+).

The enzyme catalyses 2-[(2R,5Z)-2-carboxy-4-methylthiazol-5(2H)-ylidene]ethyl phosphate + 4-amino-2-methyl-5-(diphosphooxymethyl)pyrimidine + 2 H(+) = thiamine phosphate + CO2 + diphosphate. The catalysed reaction is 2-(2-carboxy-4-methylthiazol-5-yl)ethyl phosphate + 4-amino-2-methyl-5-(diphosphooxymethyl)pyrimidine + 2 H(+) = thiamine phosphate + CO2 + diphosphate. It catalyses the reaction 4-methyl-5-(2-phosphooxyethyl)-thiazole + 4-amino-2-methyl-5-(diphosphooxymethyl)pyrimidine + H(+) = thiamine phosphate + diphosphate. It functions in the pathway cofactor biosynthesis; thiamine diphosphate biosynthesis; thiamine phosphate from 4-amino-2-methyl-5-diphosphomethylpyrimidine and 4-methyl-5-(2-phosphoethyl)-thiazole: step 1/1. Functionally, condenses 4-methyl-5-(beta-hydroxyethyl)thiazole monophosphate (THZ-P) and 2-methyl-4-amino-5-hydroxymethyl pyrimidine pyrophosphate (HMP-PP) to form thiamine monophosphate (TMP). The polypeptide is Thiamine-phosphate synthase (Shigella sonnei (strain Ss046)).